Reading from the N-terminus, the 555-residue chain is Urocanate hydratase (555 aa).

NAD(+) contacts are provided by residues G51 to G52, Q129, G175 to G177, E195, Q262 to H266, Y272 to L273, and Y321. C409 is a catalytic residue. G491 contributes to the NAD(+) binding site.

Belongs to the urocanase family. NAD(+) is required as a cofactor.

It localises to the cytoplasm. The catalysed reaction is 4-imidazolone-5-propanoate = trans-urocanate + H2O. The protein operates within amino-acid degradation; L-histidine degradation into L-glutamate; N-formimidoyl-L-glutamate from L-histidine: step 2/3. Its function is as follows. Catalyzes the conversion of urocanate to 4-imidazolone-5-propionate. The sequence is that of Urocanate hydratase from Stenotrophomonas maltophilia (strain R551-3).